We begin with the raw amino-acid sequence, 455 residues long: Major capsid protein (455 aa).

Belongs to the ascoviridae capsid protein family.

Its subcellular location is the virion. Major protein of the capsid. This Heliothis virescens ascovirus 3e (HvAV-3e) protein is Major capsid protein (MCP).